The sequence spans 313 residues: Ribose 1,5-bisphosphate isomerase (313 aa).

Substrate contacts are provided by residues 17 to 20 (RGAA) and Arg-57. The Proton acceptor role is filled by Cys-121. Asp-190 functions as the Proton donor in the catalytic mechanism. Substrate contacts are provided by residues 200–201 (NK) and Lys-226.

It belongs to the eIF-2B alpha/beta/delta subunits family. R15P isomerase subfamily.

It carries out the reaction alpha-D-ribose 1,5-bisphosphate = D-ribulose 1,5-bisphosphate. Functionally, catalyzes the isomerization of ribose 1,5-bisphosphate (R15P) to ribulose 1,5-bisphosphate (RuBP), the CO(2) acceptor and substrate for RubisCO. Functions in an archaeal AMP degradation pathway, together with AMP phosphorylase and RubisCO. This is Ribose 1,5-bisphosphate isomerase from Archaeoglobus fulgidus (strain ATCC 49558 / DSM 4304 / JCM 9628 / NBRC 100126 / VC-16).